The sequence spans 176 residues: Shikimate kinase (176 aa).

Glycine 14–serine 19 contacts ATP. Mg(2+) is bound at residue serine 18. Residues aspartate 36, arginine 60, and glycine 82 each contribute to the substrate site. Arginine 120 is an ATP binding site. Arginine 138 contacts substrate.

Belongs to the shikimate kinase family. In terms of assembly, monomer. Requires Mg(2+) as cofactor.

It is found in the cytoplasm. The enzyme catalyses shikimate + ATP = 3-phosphoshikimate + ADP + H(+). The protein operates within metabolic intermediate biosynthesis; chorismate biosynthesis; chorismate from D-erythrose 4-phosphate and phosphoenolpyruvate: step 5/7. Its function is as follows. Catalyzes the specific phosphorylation of the 3-hydroxyl group of shikimic acid using ATP as a cosubstrate. The chain is Shikimate kinase from Dehalococcoides mccartyi (strain ATCC BAA-2266 / KCTC 15142 / 195) (Dehalococcoides ethenogenes (strain 195)).